The following is an 88-amino-acid chain: UPF0297 protein BT9727_4120 (88 aa).

The protein belongs to the UPF0297 family.

The chain is UPF0297 protein BT9727_4120 from Bacillus thuringiensis subsp. konkukian (strain 97-27).